Reading from the N-terminus, the 480-residue chain is Endothelial transcription factor GATA-2 (480 aa).

A Phosphoserine modification is found at serine 73. Arginine 86 carries the post-translational modification Asymmetric dimethylarginine. The segment at 166 to 208 is disordered; that stretch reads SGSHLFGFPPTPPKEVSPDPSTTGAASPASPSAGGSVARGEDK. Over residues 183-201 the composition is skewed to low complexity; it reads PDPSTTGAASPASPSAGGS. Residue serine 192 is modified to Phosphoserine. 2 GATA-type zinc fingers span residues 295–319 and 349–373; these read CVNC…CNAC and CANC…CNAC. Lysine 389 participates in a covalent cross-link: Glycyl lysine isopeptide (Lys-Gly) (interchain with G-Cter in SUMO2). The tract at residues 457–480 is disordered; the sequence is TPIHPSSSLSFGHPHPSSMVTAMG.

As to quaternary structure, interacts with BRD3. Interacts with AR and CCAR1. Interacts with MDFIC.

Its subcellular location is the nucleus. In terms of biological role, transcriptional activator which regulates endothelin-1 gene expression in endothelial cells. Binds to the consensus sequence 5'-AGATAG-3'. Plays an important role in the regulation of phagocytosis in alveolar macrophages, particularly during P.carinii infection. The sequence is that of Endothelial transcription factor GATA-2 from Rattus norvegicus (Rat).